A 443-amino-acid polypeptide reads, in one-letter code: Exodeoxyribonuclease 7 large subunit (443 aa).

It belongs to the XseA family. As to quaternary structure, heterooligomer composed of large and small subunits.

It localises to the cytoplasm. The catalysed reaction is Exonucleolytic cleavage in either 5'- to 3'- or 3'- to 5'-direction to yield nucleoside 5'-phosphates.. Functionally, bidirectionally degrades single-stranded DNA into large acid-insoluble oligonucleotides, which are then degraded further into small acid-soluble oligonucleotides. The sequence is that of Exodeoxyribonuclease 7 large subunit from Legionella pneumophila (strain Corby).